Reading from the N-terminus, the 116-residue chain is Large ribosomal subunit protein bL17 (116 aa).

Belongs to the bacterial ribosomal protein bL17 family. As to quaternary structure, part of the 50S ribosomal subunit. Contacts protein L32.

The protein is Large ribosomal subunit protein bL17 of Prochlorococcus marinus (strain MIT 9215).